Consider the following 37-residue polypeptide: Large ribosomal subunit protein bL36c (37 aa).

The protein belongs to the bacterial ribosomal protein bL36 family.

Its subcellular location is the plastid. The protein resides in the chloroplast. The chain is Large ribosomal subunit protein bL36c from Jasminum nudiflorum (Winter jasmine).